The sequence spans 523 residues: ATP-dependent RNA helicase DBP3 (523 aa).

Residues 1–21 show a composition bias toward basic and acidic residues; sequence MTKEEIADKKRKVVDEEVIEK. The disordered stretch occupies residues 1–71; the sequence is MTKEEIADKK…SEKKPEPTSA (71 aa). Residues 22–48 show a composition bias toward basic residues; the sequence is KKSKKHKKDKKDKKEKKDKKHKKHKKE. A compositionally biased stretch (basic and acidic residues) spans 49–67; it reads KKGEKEVEVPEKESEKKPE. The short motif at 114 to 140 is the Q motif element; it reads LSFDYLSLDSSIQAEISKFPKPTPIQA. Positions 143 to 315 constitute a Helicase ATP-binding domain; that stretch reads WPYLLSGKDV…STFMNNPIKV (173 aa). 156 to 163 is an ATP binding site; that stretch reads AETGSGKT. Residues 262 to 265 carry the DEAD box motif; the sequence is DEAD. The region spanning 344–493 is the Helicase C-terminal domain; sequence KLLELLKKYH…PVPEDLIKFG (150 aa).

Belongs to the DEAD box helicase family. DDX5/DBP2 subfamily.

The protein resides in the nucleus. It is found in the nucleolus. It carries out the reaction ATP + H2O = ADP + phosphate + H(+). In terms of biological role, ATP-dependent RNA helicase required for 60S ribosomal subunit synthesis. Involved in efficient pre-rRNA processing, predominantly at site A3, which is necessary for the normal formation of 25S and 5.8S rRNAs. The chain is ATP-dependent RNA helicase DBP3 (DBP3) from Saccharomyces cerevisiae (strain ATCC 204508 / S288c) (Baker's yeast).